The sequence spans 427 residues: Serine--tRNA ligase (427 aa).

Residue 231–233 (TAE) coordinates L-serine. 262–264 (RSE) contributes to the ATP binding site. Glutamate 285 lines the L-serine pocket. Residue 349–352 (EISS) participates in ATP binding. Residue serine 385 participates in L-serine binding.

It belongs to the class-II aminoacyl-tRNA synthetase family. Type-1 seryl-tRNA synthetase subfamily. Homodimer. The tRNA molecule binds across the dimer.

The protein resides in the cytoplasm. It catalyses the reaction tRNA(Ser) + L-serine + ATP = L-seryl-tRNA(Ser) + AMP + diphosphate + H(+). The enzyme catalyses tRNA(Sec) + L-serine + ATP = L-seryl-tRNA(Sec) + AMP + diphosphate + H(+). Its pathway is aminoacyl-tRNA biosynthesis; selenocysteinyl-tRNA(Sec) biosynthesis; L-seryl-tRNA(Sec) from L-serine and tRNA(Sec): step 1/1. Functionally, catalyzes the attachment of serine to tRNA(Ser). Is also able to aminoacylate tRNA(Sec) with serine, to form the misacylated tRNA L-seryl-tRNA(Sec), which will be further converted into selenocysteinyl-tRNA(Sec). This chain is Serine--tRNA ligase, found in Rhizobium etli (strain CIAT 652).